The chain runs to 296 residues: Cyclin-dependent kinase 1 (296 aa).

The 284-residue stretch at 5 to 288 (FQKLEKIGEG…AKNGLSHKYF (284 aa)) folds into the Protein kinase domain. ATP is bound by residues 11–19 (IGEGTYGVV) and Lys-34. Asp-130 acts as the Proton acceptor in catalysis.

The protein belongs to the protein kinase superfamily. CMGC Ser/Thr protein kinase family. CDC2/CDKX subfamily.

It is found in the nucleus. The enzyme catalyses L-seryl-[protein] + ATP = O-phospho-L-seryl-[protein] + ADP + H(+). It carries out the reaction L-threonyl-[protein] + ATP = O-phospho-L-threonyl-[protein] + ADP + H(+). Its function is as follows. Cyclin-dependent kinase that acts as a master regulator of the mitotic and meiotic cell cycles. The chain is Cyclin-dependent kinase 1 from Encephalitozoon cuniculi (strain GB-M1) (Microsporidian parasite).